The chain runs to 388 residues: Biotin synthase (388 aa).

The 231-residue stretch at 47 to 277 (WFGRRVKLNY…DVEVRIAGGR (231 aa)) folds into the Radical SAM core domain. Positions 65, 69, and 72 each coordinate [4Fe-4S] cluster. The [2Fe-2S] cluster site is built by cysteine 109, cysteine 142, cysteine 202, and arginine 272. The tract at residues 335–371 (APAGGCGSEQSAGCGSHEGGGACGSAPAPRTDEARTD) is disordered.

Belongs to the radical SAM superfamily. Biotin synthase family. As to quaternary structure, homodimer. [4Fe-4S] cluster serves as cofactor. Requires [2Fe-2S] cluster as cofactor.

The enzyme catalyses (4R,5S)-dethiobiotin + (sulfur carrier)-SH + 2 reduced [2Fe-2S]-[ferredoxin] + 2 S-adenosyl-L-methionine = (sulfur carrier)-H + biotin + 2 5'-deoxyadenosine + 2 L-methionine + 2 oxidized [2Fe-2S]-[ferredoxin]. It participates in cofactor biosynthesis; biotin biosynthesis; biotin from 7,8-diaminononanoate: step 2/2. In terms of biological role, catalyzes the conversion of dethiobiotin (DTB) to biotin by the insertion of a sulfur atom into dethiobiotin via a radical-based mechanism. The protein is Biotin synthase of Streptomyces avermitilis (strain ATCC 31267 / DSM 46492 / JCM 5070 / NBRC 14893 / NCIMB 12804 / NRRL 8165 / MA-4680).